The following is a 215-amino-acid chain: SAGA complex/transcription factor TFIID complex subunit Taf10 (215 aa).

Residues 1 to 77 are disordered; that stretch reads MSDINNNEPA…SRERHGSNYV (77 aa). A compositionally biased stretch (polar residues) spans 23 to 42; the sequence is GNNSMSVDEQPETSSTNLPT. Over residues 58–73 the composition is skewed to basic and acidic residues; it reads NNEDSPKSDDSRERHG. In terms of domain architecture, Histone-fold spans 58–203; sequence NNEDSPKSDD…VDDLSAALNE (146 aa).

The protein belongs to the TAF10 family. Component of the 1.8 MDa SAGA (Spt-Ada-Gcn5 acetyltransferase) complex, which is composed of 19 subunits tra1, spt7, taf5, ngg1/ada3, sgf73, spt20, spt8, taf12, taf6, hfi1/ada1, ubp8, gcn5, ada2, spt3, sgf29, taf10, taf9, sgf11 and sus1. The SAGA complex is composed of 4 modules, namely the HAT (histone acetyltransferase) module (gcn5, ada2, ngg1/ada3 and sgf29), the DUB (deubiquitinating) module (ubp8, sgf11, sgf73 and sus1), the core or TAF (TBP-associated factor) module (taf5, taf6, taf9, taf10 and taf12), and the Tra1 or SPT (Suppressor of Ty) module (tra1, hfi1/ada1, spt3, spt7, spt8 and spt20). The Tra1/SPT module binds activators, the core module recruits TBP (TATA-binding protein), the HAT module contains the histone H3 acetyltransferase gcn5, and the DUB module comprises the histone H2B deubiquitinase ubp8. Component of the 1.2 MDa TFIID complex, which is composed of TATA-binding protein (TBP) and the 14 TBP-associated factors (TAFs). It comprises 1 copy of each taf1, taf2, taf3, taf7, taf8, taf11, taf13, 2 copies of each taf4, taf5, taf6, taf9, taf10, taf12, and 3 copies of taf14. In TFIID, taf10 heterodimerizes with taf3 and taf8.

Its subcellular location is the nucleus. Functions as a component of both the DNA-binding general transcription initiation factor complex TFIID and the transcription coactivator SAGA complex. Binding of TFIID to a promoter (with or without TATA element) is the initial step in pre-initiation complex (PIC) formation. TFIID plays a key role in the regulation of gene expression by RNA polymerase II through different activities such as transcription activator interaction, core promoter recognition and selectivity, TFIIA and TFIIB interaction, chromatin modification (histone acetylation by TAF1), facilitation of DNA opening and initiation of transcription. SAGA acts as a general cofactor required for essentially all RNA polymerase II transcription. At the promoters, SAGA is required for transcription pre-initiation complex (PIC) recruitment. It influences RNA polymerase II transcriptional activity through different activities such as TBP interaction (via core/TAF module) and promoter selectivity, interaction with transcription activators (via Tra1/SPT module), and chromatin modification through histone acetylation (via HAT module) and deubiquitination (via DUB module). SAGA preferentially acetylates histones H3 (to form H3K9ac, H3K14ac, H3K18ac and H3K23ac) and H2B and deubiquitinates histone H2B. SAGA interacts with DNA via upstream activating sequences (UASs). The chain is SAGA complex/transcription factor TFIID complex subunit Taf10 from Schizosaccharomyces pombe (strain 972 / ATCC 24843) (Fission yeast).